A 264-amino-acid polypeptide reads, in one-letter code: Iodotyrosine deiodinase (264 aa).

Residues 75 to 79 (RRTVR) and 103 to 104 (SG) each bind FMN. 4 residues coordinate 3-iodo-L-tyrosine: alanine 105, glutamate 132, tyrosine 136, and lysine 157. Residues 212-214 (TST) and arginine 254 each bind FMN.

The protein belongs to the nitroreductase family. The cofactor is FMN.

It catalyses the reaction 2 iodide + L-tyrosine + 2 NADP(+) = 3,5-diiodo-L-tyrosine + 2 NADPH + H(+). The enzyme catalyses iodide + L-tyrosine + NADP(+) = 3-iodo-L-tyrosine + NADPH. The catalysed reaction is 3-iodo-L-tyrosine + iodide + NADP(+) = 3,5-diiodo-L-tyrosine + NADPH + H(+). It carries out the reaction L-tyrosine + chloride + NADP(+) = 3-chloro-L-tyrosine + NADPH. It catalyses the reaction bromide + L-tyrosine + NADP(+) = 3-bromo-L-tyrosine + NADPH. Functionally, catalyzes the dehalogenation of halotyrosines such as 3,5-diiodo-L-tyrosine. Likely to also catalyze the dehalogenation of other halotyrosines such as 3-bromo-L-tyrosine, 3-chloro-L-tyrosine and 3-iodo-L-tyrosine. This is Iodotyrosine deiodinase from Nematostella vectensis (Starlet sea anemone).